The chain runs to 249 residues: Bacillaene synthase decarboxylase PksI (249 aa).

Residue histidine 230 is part of the active site.

It belongs to the enoyl-CoA hydratase/isomerase family. In terms of assembly, homotrimer. Does not form a heterotrimeric complex with PksH.

The protein localises to the cytoplasm. Its pathway is antibiotic biosynthesis; bacillaene biosynthesis. Functionally, involved in some intermediate steps for the synthesis of the antibiotic polyketide bacillaene which is involved in secondary metabolism. Catalyzes the decarboxylation of the 3-methylglutaconyl group tethered to PksL to a 3-methylcrotonyl moiety. The protein is Bacillaene synthase decarboxylase PksI (pksI) of Bacillus subtilis (strain 168).